The chain runs to 180 residues: MKTIYFVAGLLIMLVQGSWQHALQDTEENPRSFPASQTEAHEDPDEMNEDKRHSQGTFTSDYSKYLDSRRAQDFVQWLMNTKRNRNNIAKRHDEFERHAEGTFTSDVSSYLEGQAAKEFIAWLVKGRGRRDFPEEVAIAEELGRRHADGSFSDEMSTILDNLATRDFINWLIQTKITDKK.

Residues 1 to 20 form the signal peptide; it reads MKTIYFVAGLLIMLVQGSWQ. Residues 25–58 are disordered; it reads DTEENPRSFPASQTEAHEDPDEMNEDKRHSQGTF. At S54 the chain carries Phosphoserine. A propeptide spanning residues 84 to 89 is cleaved from the precursor; that stretch reads NRNNIA. S105 and S108 each carry phosphoserine. R127 bears the Arginine amide mark. A propeptide spanning residues 131–145 is cleaved from the precursor; sequence DFPEEVAIAEELGRR. A phosphoserine mark is found at S150 and S152.

This sequence belongs to the glucagon family. Post-translationally, proglucagon is post-translationally processed in a tissue-specific manner in pancreatic A cells and intestinal L cells. In pancreatic A cells, the major bioactive hormone is glucagon cleaved by PCSK2/PC2. In the intestinal L cells PCSK1/PC1 liberates GLP-1, GLP-2, glicentin and oxyntomodulin. GLP-1 is further N-terminally truncated by post-translational processing in the intestinal L cells resulting in GLP-1(7-37) GLP-1-(7-36)amide. The C-terminal amidation is neither important for the metabolism of GLP-1 nor for its effects on the endocrine pancreas. In terms of tissue distribution, secreted in the A cells of the islets of Langerhans. Secreted in the A cells of the islets of Langerhans. Secreted from enteroendocrine L cells throughout the gastrointestinal tract. Also secreted in selected neurons in the brain. As to expression, secreted from enteroendocrine cells throughout the gastrointestinal tract. Also secreted in selected neurons in the brain. In terms of tissue distribution, secreted from enteroendocrine cells throughout the gastrointestinal tract.

The protein localises to the secreted. In terms of biological role, plays a key role in glucose metabolism and homeostasis. Regulates blood glucose by increasing gluconeogenesis and decreasing glycolysis. A counterregulatory hormone of insulin, raises plasma glucose levels in response to insulin-induced hypoglycemia. Plays an important role in initiating and maintaining hyperglycemic conditions in diabetes. Its function is as follows. Potent stimulator of glucose-dependent insulin release. Also stimulates insulin release in response to IL6. Plays important roles on gastric motility and the suppression of plasma glucagon levels. May be involved in the suppression of satiety and stimulation of glucose disposal in peripheral tissues, independent of the actions of insulin. Has growth-promoting activities on intestinal epithelium. May also regulate the hypothalamic pituitary axis (HPA) via effects on LH, TSH, CRH, oxytocin, and vasopressin secretion. Increases islet mass through stimulation of islet neogenesis and pancreatic beta cell proliferation. Inhibits beta cell apoptosis. Stimulates intestinal growth and up-regulates villus height in the small intestine, concomitant with increased crypt cell proliferation and decreased enterocyte apoptosis. The gastrointestinal tract, from the stomach to the colon is the principal target for GLP-2 action. Plays a key role in nutrient homeostasis, enhancing nutrient assimilation through enhanced gastrointestinal function, as well as increasing nutrient disposal. Stimulates intestinal glucose transport and decreases mucosal permeability. Functionally, significantly reduces food intake. Inhibits gastric emptying in humans. Suppression of gastric emptying may lead to increased gastric distension, which may contribute to satiety by causing a sensation of fullness. In terms of biological role, may modulate gastric acid secretion and the gastro-pyloro-duodenal activity. May play an important role in intestinal mucosal growth in the early period of life. This is Pro-glucagon (Gcg) from Mus musculus (Mouse).